We begin with the raw amino-acid sequence, 1146 residues long: Nucleolar protein 6 (1146 aa).

Positions M1–G48 are disordered. The residue at position 56 (S56) is a Phosphoserine. A coiled-coil region spans residues L83 to Q114. Phosphoserine occurs at positions 283, 289, and 811.

Belongs to the NRAP family. In terms of assembly, part of the small subunit (SSU) processome, composed of more than 70 proteins and the RNA chaperone small nucleolar RNA (snoRNA) U3. Interacts with RRP7A; required for NOL6 localization to nucleolus.

The protein resides in the nucleus. It localises to the nucleolus. It is found in the chromosome. Part of the small subunit (SSU) processome, first precursor of the small eukaryotic ribosomal subunit. During the assembly of the SSU processome in the nucleolus, many ribosome biogenesis factors, an RNA chaperone and ribosomal proteins associate with the nascent pre-rRNA and work in concert to generate RNA folding, modifications, rearrangements and cleavage as well as targeted degradation of pre-ribosomal RNA by the RNA exosome. The sequence is that of Nucleolar protein 6 from Homo sapiens (Human).